A 217-amino-acid polypeptide reads, in one-letter code: Adenylate kinase (217 aa).

Residue G10–T15 coordinates ATP. Residues S30 to V59 are NMP. AMP-binding positions include T31, R36, D57–V59, G85–R88, and Q92. Residues G126–D163 form an LID region. R127 is an ATP binding site. Residues C130 and C133 each coordinate Zn(2+). T136–Y137 lines the ATP pocket. Zn(2+) is bound by residues C150 and C153. AMP contacts are provided by R160 and R171. Q199 is an ATP binding site.

This sequence belongs to the adenylate kinase family. In terms of assembly, monomer.

The protein resides in the cytoplasm. The catalysed reaction is AMP + ATP = 2 ADP. It functions in the pathway purine metabolism; AMP biosynthesis via salvage pathway; AMP from ADP: step 1/1. Its function is as follows. Catalyzes the reversible transfer of the terminal phosphate group between ATP and AMP. Plays an important role in cellular energy homeostasis and in adenine nucleotide metabolism. This chain is Adenylate kinase, found in Geobacillus thermodenitrificans (strain NG80-2).